Consider the following 198-residue polypeptide: Probable chemoreceptor glutamine deamidase CheD (198 aa).

It belongs to the CheD family.

The catalysed reaction is L-glutaminyl-[protein] + H2O = L-glutamyl-[protein] + NH4(+). Functionally, probably deamidates glutamine residues to glutamate on methyl-accepting chemotaxis receptors (MCPs), playing an important role in chemotaxis. The polypeptide is Probable chemoreceptor glutamine deamidase CheD (Stenotrophomonas maltophilia (strain R551-3)).